The chain runs to 152 residues: Cell division protein SepF (152 aa).

Positions 23–32 (EVAREPEPMQ) are enriched in basic and acidic residues. The disordered stretch occupies residues 23–42 (EVAREPEPMQKKTKKEKPSK).

The protein belongs to the SepF family. Homodimer. Interacts with FtsZ.

The protein resides in the cytoplasm. Cell division protein that is part of the divisome complex and is recruited early to the Z-ring. Probably stimulates Z-ring formation, perhaps through the cross-linking of FtsZ protofilaments. Its function overlaps with FtsA. The polypeptide is Cell division protein SepF (Listeria innocua serovar 6a (strain ATCC BAA-680 / CLIP 11262)).